A 124-amino-acid polypeptide reads, in one-letter code: Acidic phospholipase A2 (124 aa).

Intrachain disulfides connect Cys26/Cys117, Cys28/Cys44, Cys43/Cys97, Cys49/Cys124, Cys50/Cys90, Cys57/Cys83, and Cys77/Cys88. Ca(2+) is bound by residues Tyr27, Gly29, and Gly31. The active site involves His47. Residue Asp48 coordinates Ca(2+). Glu89 is an active-site residue.

This sequence belongs to the phospholipase A2 family. Group II subfamily. D49 sub-subfamily. Ca(2+) serves as cofactor. Expressed by the venom gland.

The protein localises to the secreted. The enzyme catalyses a 1,2-diacyl-sn-glycero-3-phosphocholine + H2O = a 1-acyl-sn-glycero-3-phosphocholine + a fatty acid + H(+). In terms of biological role, snake venom phospholipase A2 (PLA2) that inhibits collagen- and ADP-induced platelet aggregation. PLA2 catalyzes the calcium-dependent hydrolysis of the 2-acyl groups in 3-sn-phosphoglycerides. This is Acidic phospholipase A2 from Bothrops jararaca (Jararaca).